The primary structure comprises 62 residues: UPF0434 protein azo1471 (62 aa).

It belongs to the UPF0434 family.

This chain is UPF0434 protein azo1471, found in Azoarcus sp. (strain BH72).